A 196-amino-acid chain; its full sequence is Probable GTP-binding protein EngB (196 aa).

Residues 21–195 (DVSEICLIGR…YELINKLLGS (175 aa)) enclose the EngB-type G domain. GTP-binding positions include 29 to 36 (GRSNVGKS), 56 to 60 (GKTRL), 75 to 78 (DAPG), 142 to 145 (TKLD), and 174 to 176 (ISN). Mg(2+)-binding residues include Ser36 and Thr58.

This sequence belongs to the TRAFAC class TrmE-Era-EngA-EngB-Septin-like GTPase superfamily. EngB GTPase family. Requires Mg(2+) as cofactor.

Necessary for normal cell division and for the maintenance of normal septation. This is Probable GTP-binding protein EngB from Mycoplasma capricolum subsp. capricolum (strain California kid / ATCC 27343 / NCTC 10154).